We begin with the raw amino-acid sequence, 258 residues long: Type III pantothenate kinase (258 aa).

Residue 6 to 13 coordinates ATP; the sequence is DVGNTNIV. Substrate contacts are provided by residues Y100 and 107–110; that span reads GADR. The Proton acceptor role is filled by D109. D129 serves as a coordination point for K(+). T132 is a binding site for ATP. Substrate is bound at residue T184.

The protein belongs to the type III pantothenate kinase family. As to quaternary structure, homodimer. The cofactor is NH4(+). Requires K(+) as cofactor.

It is found in the cytoplasm. The enzyme catalyses (R)-pantothenate + ATP = (R)-4'-phosphopantothenate + ADP + H(+). It functions in the pathway cofactor biosynthesis; coenzyme A biosynthesis; CoA from (R)-pantothenate: step 1/5. Catalyzes the phosphorylation of pantothenate (Pan), the first step in CoA biosynthesis. The sequence is that of Type III pantothenate kinase from Desulfitobacterium hafniense (strain DSM 10664 / DCB-2).